The primary structure comprises 486 residues: MTRSNVLPVARTYSRTFSGARLRRLRQERGLTQVALAKALDLSTSYVNQLENDQRPITVPVLLLLTERFDLSAQYFSSDSDARLVADLSDVFTDIGVEHAVSGAQIEEFVARMPEVGHSLVAVHRRLRAATEELEGYRSRATAETELPPARPMPFEEVRDFFYDRNNYIHDLDMAAERMFTESGMRTGGLDIQLAELMRDRFGISVVIDDNLPDTAKRRYHPDTKVLRVAHWLMPGQRAFQIATQLALVGQSDLISSIVATDDQLSTEARGVARIGLANYFAGAFLLPYREFHRAAEQLRYDIDLLGRRFGVGFETVCHRLSTLQRPRQRGIPFIFVRTDKAGNISKRQSATAFHFSRVGGSCPLWVVHDAFAQPERIVRQVAQMPDGRSYFWVAKTTAADGLGYLGPHKNFAVGLGCDLAHAHKLVYSTGVVLDDPSTEVPIGAGCKICNRTSCAQRAFPYLGGRVAVDENAGSSLPYSSTEQSV.

The HTH cro/C1-type domain maps to 22–76 (LRRLRQERGLTQVALAKALDLSTSYVNQLENDQRPITVPVLLLLTERFDLSAQYF). The H-T-H motif DNA-binding region spans 33–52 (QVALAKALDLSTSYVNQLEN).

The protein belongs to the short-chain fatty acyl-CoA assimilation regulator (ScfR) family.

It functions in the pathway organic acid metabolism; propanoate degradation. It participates in steroid metabolism; cholesterol metabolism. In terms of biological role, plays a key role in regulating expression of enzymes involved in the catabolism of short chain fatty acids (SCFA) via both the glyoxylate (acetyl degradation route) and the methylcitrate cycle (propionate degradation route). Required for intracellular growth in macrophages and for the assimilation of cholesterol-derived propionate. PrpR acts as a transcriptional activator of prpDC and icl genes when propionate is the main carbon source, and as a ramB repressor. During growth on propionate, PrpR also acts as a transcriptional repressor of dnaA, which encodes the DnaA initiator protein responsible for initiating chromosomal replication. It is possibly involved in the regulation of genes responsible for controlling cholesterol utilization. This chain is HTH-type transcriptional regulator PrpR, found in Mycobacterium tuberculosis (strain ATCC 25618 / H37Rv).